The sequence spans 490 residues: ATP synthase subunit beta, plastid (490 aa).

ATP is bound at residue Gly170–Thr177.

Belongs to the ATPase alpha/beta chains family. As to quaternary structure, F-type ATPases have 2 components, CF(1) - the catalytic core - and CF(0) - the membrane proton channel. CF(1) has five subunits: alpha(3), beta(3), gamma(1), delta(1), epsilon(1). CF(0) has four main subunits: a(1), b(1), b'(1) and c(9-12).

It localises to the plastid membrane. It catalyses the reaction ATP + H2O + 4 H(+)(in) = ADP + phosphate + 5 H(+)(out). Its function is as follows. Produces ATP from ADP in the presence of a proton gradient across the membrane. The catalytic sites are hosted primarily by the beta subunits. This chain is ATP synthase subunit beta, plastid, found in Cuscuta exaltata (Tall dodder).